The sequence spans 275 residues: Mitochondrial prohibitin complex protein 1 (275 aa).

A coiled-coil region spans residues 180–213; it reads REFTEAVEMKQVAQQEAEKARYLVEKAEQMKIAA.

Belongs to the prohibitin family. High molecular weight complex that consist of phb-1 and phb-2.

It localises to the mitochondrion inner membrane. PHB proteins are essential during embryonic development and are required for somatic and germline differentiation in the larval gonad. A deficiency in PHB proteins results in altered mitochondrial biogenesis in body wall muscle cells. The polypeptide is Mitochondrial prohibitin complex protein 1 (phb-1) (Caenorhabditis elegans).